Consider the following 362-residue polypeptide: Major capsid protein VP1 (362 aa).

The Bipartite nuclear localization signal motif lies at 5–19 (KRKGECPGAAPKKPK). Phosphothreonine; by host is present on Thr-338.

It belongs to the polyomaviruses coat protein VP1 family. In terms of assembly, homomultimer; disulfide-linked. The virus capsid is composed of 72 icosahedral units, each one composed of five disulfide-linked copies of VP1. Interacts with minor capsid proteins VP2 and VP3.

The protein resides in the virion. It is found in the host nucleus. Its function is as follows. Forms an icosahedral capsid with a T=7 symmetry and a 40 nm diameter. The capsid is composed of 72 pentamers linked to each other by disulfide bonds and associated with VP2 or VP3 proteins. Interacts with sialic acids on the cell surface to provide virion attachment to target cell. Once attached, the virion is internalized by endocytosis and traffics to the endoplasmic reticulum. Inside the endoplasmic reticulum, the protein folding machinery isomerizes VP1 interpentamer disulfide bonds, thereby triggering initial uncoating. Next, the virion uses the endoplasmic reticulum-associated degradation machinery to probably translocate in the cytosol before reaching the nucleus. Nuclear entry of the viral DNA involves the selective exposure and importin recognition of VP2/Vp3 nuclear localization signal. In late phase of infection, neo-synthesized VP1 encapsulates replicated genomic DNA in the nucleus, and participates in rearranging nucleosomes around the viral DNA. This is Major capsid protein VP1 from Simian virus 12 (strain wt100) (SV-12).